The primary structure comprises 571 residues: Urease subunit alpha (571 aa).

In terms of domain architecture, Urease spans 132–571 (GGIDSHIHFI…LPMAQRYFLF (440 aa)). Ni(2+) contacts are provided by H137, H139, and K220. An N6-carboxylysine modification is found at K220. H222 is a substrate binding site. Residues H249 and H275 each coordinate Ni(2+). The active-site Proton donor is the H323. A Ni(2+)-binding site is contributed by D363.

It belongs to the metallo-dependent hydrolases superfamily. Urease alpha subunit family. Heterotrimer of UreA (gamma), UreB (beta) and UreC (alpha) subunits. Three heterotrimers associate to form the active enzyme. The cofactor is Ni cation. Carboxylation allows a single lysine to coordinate two nickel ions.

The protein resides in the cytoplasm. The enzyme catalyses urea + 2 H2O + H(+) = hydrogencarbonate + 2 NH4(+). Its pathway is nitrogen metabolism; urea degradation; CO(2) and NH(3) from urea (urease route): step 1/1. This is Urease subunit alpha from Kocuria rhizophila (strain ATCC 9341 / DSM 348 / NBRC 103217 / DC2201).